Here is a 303-residue protein sequence, read N- to C-terminus: MYIQILGSAAGGGFPQWNCNCVNCAGFRDGSLRAQARTQSSIALSDDGINWVLCNASPDIRAQLQGFAPMQPGRALRDTGISAIVLMDSQIDHTTGLLSLREGCPHQVWCTEMVHEDLSTGFPLFEMLKHWNGGLTWNRIELQGSFVIPACPNLRFTPFPLRSAAPPYSPHRFDPHPGDNIGLLVEDTRTGGKLFYAPGLGKVDEALAEKMRDADCLLVDGTMWDDDEMQRRGVGTRTGREMGHLAQNGPGGMLEVLEGFPEQRKVLIHINNTNPILDEDSPERAELVRRNVEVAFDGMSIEL.

The protein belongs to the PqqB family.

The protein operates within cofactor biosynthesis; pyrroloquinoline quinone biosynthesis. Its function is as follows. May be involved in the transport of PQQ or its precursor to the periplasm. This is Coenzyme PQQ synthesis protein B from Pseudomonas savastanoi pv. phaseolicola (strain 1448A / Race 6) (Pseudomonas syringae pv. phaseolicola (strain 1448A / Race 6)).